The following is a 609-amino-acid chain: Protein alan shepard (609 aa).

The span at 1-12 (MHPRYSPAPPPL) shows a compositional bias: pro residues. Residues 1–96 (MHPRYSPAPP…ASVAAAPPTP (96 aa)) form a disordered region. Phosphotyrosine is present on tyrosine 5. Over residues 13-35 (HQQQQQQPPQQQQQQMGGPHQQQ) the composition is skewed to low complexity. Over residues 37-50 (GGVGPGTGHGGVGA) the composition is skewed to gly residues. Low complexity-rich tracts occupy residues 51-68 (AVGASNAGHMRAPPNSQQ) and 83-92 (SSSAASVAAA). Phosphotyrosine is present on residues tyrosine 152 and tyrosine 168. The disordered stretch occupies residues 190-252 (PATTTYGQRV…AQNQNQQGGE (63 aa)). Over residues 204 to 252 (SPSNTNSSSSSNTGSQSGTLSTSLSNTTNTNTTMGPNGTAQNQNQQGGE) the composition is skewed to low complexity. 2 consecutive RRM domains span residues 257-330 (TNLY…MAKQ) and 336-415 (TNLY…FADG). The tract at residues 583–609 (MTDSEQASTAASPDEAYTQYPHQAAPK) is disordered.

Functionally, has a role in the perception of gravity. This is Protein alan shepard from Drosophila grimshawi (Hawaiian fruit fly).